The primary structure comprises 497 residues: Putative BTB/POZ domain-containing protein R738 (497 aa).

A BTB domain is found at Ser-16–Ala-86.

The protein belongs to the mimivirus BTB/WD family.

This chain is Putative BTB/POZ domain-containing protein R738, found in Acanthamoeba polyphaga (Amoeba).